An 821-amino-acid chain; its full sequence is MSPSPAERAEDLRRQIAQANRAYHELDAPEIPDVDYDRMVRELEALEREHPELARADSPTQQVGARPSGRFPEVRHAVPMLSLSNAFSDEEVADFVRRIDERLGRRSLRFSAEPKMDGLAISLRYEDGHFVLGATRGDGSTGEDVTANLREIGDIPKRLHGKDWPDVLEVRGEVYMARADFEAYNERARLQGGKVLANPRNAAAGSLRQLDPKISAQRRLSFFAYGTGEVQGGELPDTHSGTLAQLGAWGFPVSELCKVVEGTDGLLGYYRTIGERRDGLPFDIDGVVYKLDDRAGQQAMGFVSRAPRWAIAHKFPAQEQSTTVEAIEIQIGRTGAATPVARLAPVAVAGVIVSNATLHNADQIARLDVRVGDSVIVRRAGDVIPEVVSVILDRRPQGTTPWQMPTRCPVCGSEIVREEGAAAWRCSGELSCPAQRKEAIAHFASRRAMDIDGLGDKYIETLVDAGIVKSVADLYRLSRDTLLHLKLVLDAEEPSALAAALKLHLPAEGSGAVLNAVLKLDGNDPGWRAQALAQPASFEWNTKKIATKWADNLIAAIDASRAATLERVLFALGIEHVGESTAKALAQWFGDLELIRHLPWPLFKRVPDIGGEVARSLGHFFEQQGNQQAIDDLLQVGQVRIADVHAPSAKLREGLDLAQLLVESEIPGITRLRAEKLVAALPGAQAVLDAEHGQFVNAGLPDDTARGLAEWLDADGHGAMLLAAENAMREILAKAPALAEIVAGPLDGQTVVLTGTLAQLTRDAAKERLEALGAKVSGSVSKKTSFVVAGTEAGSKLDKAQSLGVSVWDEDRLLAYLAEHE.

NAD(+)-binding positions include 33–37 (DVDYD), 82–83 (SL), and Glu113. Lys115 serves as the catalytic N6-AMP-lysine intermediate. Residues Arg136, Glu173, Lys290, and Lys314 each coordinate NAD(+). Residues Cys408, Cys411, Cys426, and Cys432 each coordinate Zn(2+). The BRCT domain maps to 741–821 (IVAGPLDGQT…RLLAYLAEHE (81 aa)).

Belongs to the NAD-dependent DNA ligase family. LigA subfamily. Requires Mg(2+) as cofactor. The cofactor is Mn(2+).

The catalysed reaction is NAD(+) + (deoxyribonucleotide)n-3'-hydroxyl + 5'-phospho-(deoxyribonucleotide)m = (deoxyribonucleotide)n+m + AMP + beta-nicotinamide D-nucleotide.. Functionally, DNA ligase that catalyzes the formation of phosphodiester linkages between 5'-phosphoryl and 3'-hydroxyl groups in double-stranded DNA using NAD as a coenzyme and as the energy source for the reaction. It is essential for DNA replication and repair of damaged DNA. The polypeptide is DNA ligase (Stenotrophomonas maltophilia (strain K279a)).